The following is a 452-amino-acid chain: COP9 signalosome complex subunit 11 (452 aa).

In terms of domain architecture, PCI spans 205–374; the sequence is FYIEDPKTMM…ISYSKRSIVD (170 aa).

As to quaternary structure, component of a COP9 signalosome-like (CSN) complex.

It localises to the cytoplasm. It is found in the nucleus. Component of the COP9 signalosome (CSN) complex that acts as an regulator of the ubiquitin (Ubl) conjugation pathway by mediating the deneddylation of the cullin subunit of SCF-type E3 ubiquitin-protein ligase complexes The CSN complex is involved in the regulation of the mating pheromone response. PCI8 may also be involved in transcriptional and translational control. The chain is COP9 signalosome complex subunit 11 (PCI8) from Candida glabrata (strain ATCC 2001 / BCRC 20586 / JCM 3761 / NBRC 0622 / NRRL Y-65 / CBS 138) (Yeast).